We begin with the raw amino-acid sequence, 456 residues long: GPI-anchored protein 13 (456 aa).

Positions 1–23 (MRSPSLAVAATTVLGLFSSSALA) are cleaved as a signal peptide. Asn27 carries N-linked (GlcNAc...) asparagine glycosylation. Gly433 carries GPI-anchor amidated glycine lipidation. Residues 434 to 456 (AAAVNVVPTTAFGLFAIILASIF) constitute a propeptide, removed in mature form.

In terms of processing, the GPI-anchor is attached to the protein in the endoplasmic reticulum and serves to target the protein to the cell surface. There, the glucosamine-inositol phospholipid moiety is cleaved off and the GPI-modified mannoprotein is covalently attached via its lipidless GPI glycan remnant to the 1,6-beta-glucan of the outer cell wall layer.

The protein resides in the secreted. The protein localises to the cell wall. It is found in the membrane. Cell wall protein which contributes to cell wall synthesis and is important for acquiring normal surface properties. Required for virulence in a mouse infection model. The chain is GPI-anchored protein 13 (PGA13) from Candida albicans (strain SC5314 / ATCC MYA-2876) (Yeast).